A 100-amino-acid chain; its full sequence is Large ribosomal subunit protein uL23 (100 aa).

It belongs to the universal ribosomal protein uL23 family. In terms of assembly, part of the 50S ribosomal subunit. Contacts protein L29, and trigger factor when it is bound to the ribosome.

In terms of biological role, one of the early assembly proteins it binds 23S rRNA. One of the proteins that surrounds the polypeptide exit tunnel on the outside of the ribosome. Forms the main docking site for trigger factor binding to the ribosome. The sequence is that of Large ribosomal subunit protein uL23 from Parasynechococcus marenigrum (strain WH8102).